Consider the following 96-residue polypeptide: uncharacterized protein (96 aa).

This is an uncharacterized protein from Homo sapiens (Human).